A 246-amino-acid polypeptide reads, in one-letter code: Polyhedrin (246 aa).

This sequence belongs to the polyhedrin family.

Major component of the virus occlusion bodies, which are large proteinaceous structures (polyhedra), that protect the virus from the outside environment for extended periods until they are ingested by insect larvae. In Spodoptera exigua nuclear polyhedrosis virus (strain US) (SeMNPV), this protein is Polyhedrin (PH).